The sequence spans 488 residues: MGIAHTEWESVIGLEVHVELNTESKLFSPARNHFGDEPNTNISPVCTGMPGSLPVLNKDAVRKAVLFGCAVEGDVALFSRFDRKSYFYPDSPRNFQITQYEHPIVRGGCIRAVVEGEEKTFELAQTHLEDDAGMLKHFGDFAGVDYNRAGVPLIEIVSKPCMFSAEDAVAYANALVSILGYIGISDCNMEEGSIRFDVNISVRPRGSRELRNKVEIKNMNSFTFMAQALEAEKRRQIEEYLSYPNEDPKKVVPAATYRWDPEKKKTVLMRLKERAEDYMYFVEPDLPVLQITETYIDEVRQTLPELPHSKYMRYITDFDIAEDLAMILVSDRHTAHFFETATMSCKNYRALSNWITVEFAGRCKARGKTLPFTGILPEWVAQLVNFIDRGVITGKIAKEIADRMVSSFGESPEDILRRHPSLLPMTDDHALRAIVKEVVAQNTASVADYKNGKAKALGFLVGQIMKRTEGKAPPKRVNELLLAAMRDM.

It belongs to the GatB/GatE family. GatB subfamily. Heterotrimer of A, B and C subunits.

It carries out the reaction L-glutamyl-tRNA(Gln) + L-glutamine + ATP + H2O = L-glutaminyl-tRNA(Gln) + L-glutamate + ADP + phosphate + H(+). It catalyses the reaction L-aspartyl-tRNA(Asn) + L-glutamine + ATP + H2O = L-asparaginyl-tRNA(Asn) + L-glutamate + ADP + phosphate + 2 H(+). Its function is as follows. Allows the formation of correctly charged Asn-tRNA(Asn) or Gln-tRNA(Gln) through the transamidation of misacylated Asp-tRNA(Asn) or Glu-tRNA(Gln) in organisms which lack either or both of asparaginyl-tRNA or glutaminyl-tRNA synthetases. The reaction takes place in the presence of glutamine and ATP through an activated phospho-Asp-tRNA(Asn) or phospho-Glu-tRNA(Gln). This chain is Aspartyl/glutamyl-tRNA(Asn/Gln) amidotransferase subunit B, found in Chlamydia trachomatis serovar A (strain ATCC VR-571B / DSM 19440 / HAR-13).